A 179-amino-acid polypeptide reads, in one-letter code: ATP synthase subunit delta (179 aa).

The protein belongs to the ATPase delta chain family. In terms of assembly, F-type ATPases have 2 components, F(1) - the catalytic core - and F(0) - the membrane proton channel. F(1) has five subunits: alpha(3), beta(3), gamma(1), delta(1), epsilon(1). F(0) has three main subunits: a(1), b(2) and c(10-14). The alpha and beta chains form an alternating ring which encloses part of the gamma chain. F(1) is attached to F(0) by a central stalk formed by the gamma and epsilon chains, while a peripheral stalk is formed by the delta and b chains.

It is found in the cell membrane. F(1)F(0) ATP synthase produces ATP from ADP in the presence of a proton or sodium gradient. F-type ATPases consist of two structural domains, F(1) containing the extramembraneous catalytic core and F(0) containing the membrane proton channel, linked together by a central stalk and a peripheral stalk. During catalysis, ATP synthesis in the catalytic domain of F(1) is coupled via a rotary mechanism of the central stalk subunits to proton translocation. Functionally, this protein is part of the stalk that links CF(0) to CF(1). It either transmits conformational changes from CF(0) to CF(1) or is implicated in proton conduction. In Clostridium botulinum (strain Kyoto / Type A2), this protein is ATP synthase subunit delta.